A 128-amino-acid chain; its full sequence is Small ribosomal subunit protein eS8 (128 aa).

It belongs to the eukaryotic ribosomal protein eS8 family. In terms of assembly, part of the 30S ribosomal subunit.

This chain is Small ribosomal subunit protein eS8, found in Metallosphaera sedula (strain ATCC 51363 / DSM 5348 / JCM 9185 / NBRC 15509 / TH2).